The following is a 221-amino-acid chain: 7-cyano-7-deazaguanine synthase (221 aa).

Tyrosine 9–leucine 19 is a binding site for ATP. Positions 185, 193, 196, and 199 each coordinate Zn(2+).

This sequence belongs to the QueC family. Zn(2+) serves as cofactor.

The enzyme catalyses 7-carboxy-7-deazaguanine + NH4(+) + ATP = 7-cyano-7-deazaguanine + ADP + phosphate + H2O + H(+). The protein operates within purine metabolism; 7-cyano-7-deazaguanine biosynthesis. Functionally, catalyzes the ATP-dependent conversion of 7-carboxy-7-deazaguanine (CDG) to 7-cyano-7-deazaguanine (preQ(0)). This chain is 7-cyano-7-deazaguanine synthase, found in Marinobacter nauticus (strain ATCC 700491 / DSM 11845 / VT8) (Marinobacter aquaeolei).